Consider the following 320-residue polypeptide: Cytochrome f (320 aa).

The first 35 residues, 1-35 (MQTRNAFSWLKKQITRSISVSLMIYILTRTSISSA), serve as a signal peptide directing secretion. Heme-binding residues include Tyr-36, Cys-56, Cys-59, and His-60. A helical transmembrane segment spans residues 286 to 305 (VQGLLFFLASVILAQIFLVL).

This sequence belongs to the cytochrome f family. The 4 large subunits of the cytochrome b6-f complex are cytochrome b6, subunit IV (17 kDa polypeptide, petD), cytochrome f and the Rieske protein, while the 4 small subunits are PetG, PetL, PetM and PetN. The complex functions as a dimer. The cofactor is heme.

It localises to the plastid. It is found in the chloroplast thylakoid membrane. Component of the cytochrome b6-f complex, which mediates electron transfer between photosystem II (PSII) and photosystem I (PSI), cyclic electron flow around PSI, and state transitions. The chain is Cytochrome f from Atropa belladonna (Belladonna).